A 274-amino-acid polypeptide reads, in one-letter code: 2,3,4,5-tetrahydropyridine-2,6-dicarboxylate N-succinyltransferase (274 aa).

Residues Arg-103 and Asp-140 each contribute to the substrate site.

The protein belongs to the transferase hexapeptide repeat family. Homotrimer.

It is found in the cytoplasm. The enzyme catalyses (S)-2,3,4,5-tetrahydrodipicolinate + succinyl-CoA + H2O = (S)-2-succinylamino-6-oxoheptanedioate + CoA. It functions in the pathway amino-acid biosynthesis; L-lysine biosynthesis via DAP pathway; LL-2,6-diaminopimelate from (S)-tetrahydrodipicolinate (succinylase route): step 1/3. This Actinobacillus pleuropneumoniae serotype 5b (strain L20) protein is 2,3,4,5-tetrahydropyridine-2,6-dicarboxylate N-succinyltransferase.